The chain runs to 505 residues: Probable cytosol aminopeptidase (505 aa).

K269 and D274 together coordinate Mn(2+). Residue K281 is part of the active site. Mn(2+) contacts are provided by D292, D351, and E353. R355 is an active-site residue.

It belongs to the peptidase M17 family. Requires Mn(2+) as cofactor.

It localises to the cytoplasm. It catalyses the reaction Release of an N-terminal amino acid, Xaa-|-Yaa-, in which Xaa is preferably Leu, but may be other amino acids including Pro although not Arg or Lys, and Yaa may be Pro. Amino acid amides and methyl esters are also readily hydrolyzed, but rates on arylamides are exceedingly low.. It carries out the reaction Release of an N-terminal amino acid, preferentially leucine, but not glutamic or aspartic acids.. Presumably involved in the processing and regular turnover of intracellular proteins. Catalyzes the removal of unsubstituted N-terminal amino acids from various peptides. In Rhodococcus opacus (strain B4), this protein is Probable cytosol aminopeptidase.